An 814-amino-acid chain; its full sequence is Phenylalanine--tRNA ligase beta subunit (814 aa).

One can recognise a tRNA-binding domain in the interval 39–153 (SKNVNGVVLG…LKHELGTPVS (115 aa)). One can recognise a B5 domain in the interval 414 to 500 (NEDIFIKLRR…RLIGYDRFDL (87 aa)). Positions 478, 484, 487, and 488 each coordinate Mg(2+). The region spanning 720–813 (PIVPKIERDI…IEKSFQTKLR (94 aa)) is the FDX-ACB domain.

The protein belongs to the phenylalanyl-tRNA synthetase beta subunit family. Type 1 subfamily. In terms of assembly, tetramer of two alpha and two beta subunits. Mg(2+) is required as a cofactor.

It localises to the cytoplasm. It carries out the reaction tRNA(Phe) + L-phenylalanine + ATP = L-phenylalanyl-tRNA(Phe) + AMP + diphosphate + H(+). This Prochlorococcus marinus (strain MIT 9312) protein is Phenylalanine--tRNA ligase beta subunit.